The following is a 107-amino-acid chain: Large ribosomal subunit protein uL24 (107 aa).

This sequence belongs to the universal ribosomal protein uL24 family. In terms of assembly, part of the 50S ribosomal subunit.

Its function is as follows. One of two assembly initiator proteins, it binds directly to the 5'-end of the 23S rRNA, where it nucleates assembly of the 50S subunit. Functionally, one of the proteins that surrounds the polypeptide exit tunnel on the outside of the subunit. This is Large ribosomal subunit protein uL24 from Solidesulfovibrio magneticus (strain ATCC 700980 / DSM 13731 / RS-1) (Desulfovibrio magneticus).